The sequence spans 211 residues: Thymidylate kinase (211 aa).

ATP is bound at residue 10-17 (GPDGAGKT).

This sequence belongs to the thymidylate kinase family.

The enzyme catalyses dTMP + ATP = dTDP + ADP. Phosphorylation of dTMP to form dTDP in both de novo and salvage pathways of dTTP synthesis. In Lactococcus lactis subsp. cremoris (strain MG1363), this protein is Thymidylate kinase.